We begin with the raw amino-acid sequence, 106 residues long: Stress-responsive protein 1 (106 aa).

It is found in the mitochondrion. Its function is as follows. Stress-responsive protein that may play a role in regulation of cell cycle. The sequence is that of Stress-responsive protein 1 (sro1) from Schizosaccharomyces pombe (strain 972 / ATCC 24843) (Fission yeast).